The chain runs to 257 residues: Diphthine synthase (257 aa).

Residues L9, D85, V88, 113–114 (SI), L164, A209, and H234 contribute to the S-adenosyl-L-methionine site.

This sequence belongs to the diphthine synthase family. As to quaternary structure, homodimer.

The enzyme catalyses 2-[(3S)-amino-3-carboxypropyl]-L-histidyl-[translation elongation factor 2] + 3 S-adenosyl-L-methionine = diphthine-[translation elongation factor 2] + 3 S-adenosyl-L-homocysteine + 3 H(+). It participates in protein modification; peptidyl-diphthamide biosynthesis. In terms of biological role, S-adenosyl-L-methionine-dependent methyltransferase that catalyzes the trimethylation of the amino group of the modified target histidine residue in translation elongation factor 2 (EF-2), to form an intermediate called diphthine. The three successive methylation reactions represent the second step of diphthamide biosynthesis. The sequence is that of Diphthine synthase from Methanocaldococcus jannaschii (strain ATCC 43067 / DSM 2661 / JAL-1 / JCM 10045 / NBRC 100440) (Methanococcus jannaschii).